The following is a 295-amino-acid chain: Xyloglucan endotransglucosylase protein 2 (295 aa).

The first 23 residues, 1–23, serve as a signal peptide directing secretion; it reads MAMGTHFGGLWLALLCMVSATMG. The GH16 domain occupies 24 to 222; the sequence is AVPRKPVDVP…WSKAPFVASY (199 aa). Catalysis depends on E108, which acts as the Nucleophile. The active-site Proton donor is the E112. E112 serves as a coordination point for xyloglucan. N116 is a glycosylation site (N-linked (GlcNAc...) asparagine). Residues 125–127, 135–137, 201–202, and G206 each bind xyloglucan; these read QTN, DRE, and DW. Intrachain disulfides connect C230-C239 and C276-C289. R281 provides a ligand contact to xyloglucan.

It belongs to the glycosyl hydrolase 16 family. XTH group 1 subfamily. Post-translationally, contains at least one intrachain disulfide bond essential for its enzymatic activity. Expressed in fruit pulp.

The protein localises to the secreted. Its subcellular location is the cell wall. The protein resides in the extracellular space. It is found in the apoplast. It carries out the reaction breaks a beta-(1-&gt;4) bond in the backbone of a xyloglucan and transfers the xyloglucanyl segment on to O-4 of the non-reducing terminal glucose residue of an acceptor, which can be a xyloglucan or an oligosaccharide of xyloglucan.. Its function is as follows. Catalyzes xyloglucan endotransglycosylation (XET). Cleaves and religates xyloglucan polymers. Does not catalyze xyloglucan endohydrolysis (XEH). Probably involved in cell wall restructuring during fruit ripening and postharvest fruit softening. This chain is Xyloglucan endotransglucosylase protein 2, found in Diospyros kaki (Kaki persimmon).